The chain runs to 357 residues: Pre-mRNA-splicing factor RBM22 homolog (357 aa).

A C3H1-type zinc finger spans residues 153–180; sequence RNMARVCSFWRKNSCNRGDECPYLHKEI. The 74-residue stretch at 222–295 folds into the RRM domain; it reads NKICIQGISE…CNLTVHLQDN (74 aa).

Belongs to the SLT11 family. Probable component of the spliceosome C complex.

The protein localises to the nucleus. Its function is as follows. Involved in pre-mRNA splicing. Binds RNA. This is Pre-mRNA-splicing factor RBM22 homolog from Plasmodium falciparum (isolate 3D7).